A 597-amino-acid polypeptide reads, in one-letter code: MSAILSADDLNDFISPGVACIKPVETLPAKDPSKTDNPYEVTTEDKVQPENLPPAQISLTDCLACSGCVTSAEAVLISLQSHAEVLNTLDAHPELPLNREDGTITQELGTASDEGRVFVASVSPQVRASLAATYGITEKEATYMIHQFLSGPHGLRAGGKNGSGFTWVADTNVLREAVLVLTADEVGETLTTSPDSPSTNGATNTLPKRPILSSACPGWICYAEKTHPFVLPHLSRLKSPQALAGTFFKTVLSKSLGIPASRIWHLAVMPCFDKKLEASREELTDASWLSAKDEDHTAVRDVDCVITTREMLSLASSRGISLPNLPLKSLPQSYIPPFPDMTLNDFLFSKSSPGQSAAAGTSGGYLHHVLQTFQARNPGSEIVTQRGRNADVVEYTLMSSEHTPILKAARYYGFRNIQNLVRKLKPARASRLPGGNRRLPVGRGAASGSSGTDYAYVEVMACPGGCTNGGGQIRIEDAREASSSVQSSTSAEVPDSSSKPTPHEQRAWLARVDEAYYSAESDTESEAGSQSQPLSILDKEDKIHNAMRYWSDSMGIPLSKLAYTTYREVESDVGKSQPAATDTTRVAELAGKIGGGW.

Cys20, Cys62, Cys65, Cys68, Cys216, and Cys271 together coordinate [4Fe-4S] cluster. A disordered region spans residues 428–449; the sequence is RASRLPGGNRRLPVGRGAASGS. Positions 462 and 466 each coordinate [4Fe-4S] cluster. Positions 479–505 are disordered; sequence REASSSVQSSTSAEVPDSSSKPTPHEQ.

Belongs to the NARF family.

Functionally, component of the cytosolic Fe/S protein assembly machinery. Required for maturation of extramitochondrial Fe/S proteins. May play a role in the transfer of pre-assembled Fe/S clusters to target apoproteins. The chain is Cytosolic Fe-S cluster assembly factor nar1 (nar1) from Aspergillus niger (strain ATCC MYA-4892 / CBS 513.88 / FGSC A1513).